A 748-amino-acid polypeptide reads, in one-letter code: Cysteine--tRNA ligase, cytoplasmic (748 aa).

A disordered region spans residues 1–25; it reads MAAAPAEQGKGKRVQPPWSPPEGTK. Cysteine 55 provides a ligand contact to Zn(2+). Residue glycine 56 coordinates L-cysteine. A 'HIGH' region motif is present at residues 57-67; the sequence is PTVYDASHMGH. Threonine 96 serves as a coordination point for L-cysteine. The 'KIIK' region motif lies at 101 to 104; it reads KIIK. The Zn(2+) site is built by cysteine 348, histidine 373, and glutamate 377. Histidine 373 is an L-cysteine binding site. A 'KMSKS' region motif is present at residues 406 to 410; sequence KMSKS. Lysine 409 is an ATP binding site. Composition is skewed to basic and acidic residues over residues 656–679 and 686–717; these read KIEE…EAAK and PPHE…KELS. Positions 656-719 are disordered; sequence KIEEEKKRKK…DTEGKELSKG (64 aa).

The protein belongs to the class-I aminoacyl-tRNA synthetase family. Homodimer. It depends on Zn(2+) as a cofactor.

It localises to the cytoplasm. The enzyme catalyses tRNA(Cys) + L-cysteine + ATP = L-cysteinyl-tRNA(Cys) + AMP + diphosphate. Its function is as follows. Catalyzes the ATP-dependent ligation of cysteine to tRNA(Cys). This is Cysteine--tRNA ligase, cytoplasmic (CARS1) from Gallus gallus (Chicken).